The following is a 209-amino-acid chain: Octanoyltransferase (209 aa).

Positions 30 to 209 (DNEPEIVYLV…IQTEFNKIFK (180 aa)) constitute a BPL/LPL catalytic domain. Substrate contacts are provided by residues 69–76 (RGGKFTFH), 143–145 (AIG), and 156–158 (GIA). The active-site Acyl-thioester intermediate is the Cys174.

This sequence belongs to the LipB family.

It is found in the cytoplasm. The catalysed reaction is octanoyl-[ACP] + L-lysyl-[protein] = N(6)-octanoyl-L-lysyl-[protein] + holo-[ACP] + H(+). It participates in protein modification; protein lipoylation via endogenous pathway; protein N(6)-(lipoyl)lysine from octanoyl-[acyl-carrier-protein]: step 1/2. Functionally, catalyzes the transfer of endogenously produced octanoic acid from octanoyl-acyl-carrier-protein onto the lipoyl domains of lipoate-dependent enzymes. Lipoyl-ACP can also act as a substrate although octanoyl-ACP is likely to be the physiological substrate. The sequence is that of Octanoyltransferase from Rickettsia prowazekii (strain Madrid E).